Here is a 55-residue protein sequence, read N- to C-terminus: uncharacterized protein (55 aa).

Over residues 1 to 15 (MVGQEQLESSPLCQH) the composition is skewed to polar residues. Residues 1 to 26 (MVGQEQLESSPLCQHSDNETETKREC) form a disordered region. The segment covering 16-26 (SDNETETKREC) has biased composition (basic and acidic residues).

This is an uncharacterized protein from Escherichia coli (strain K12).